Here is a 520-residue protein sequence, read N- to C-terminus: Developmental regulatory protein wetA (520 aa).

Disordered stretches follow at residues 49–72 (GDLP…NEWS), 104–165 (VPSR…MRSS), 236–295 (QSPS…WQSD), 367–453 (DHSF…GSNK), and 471–496 (LTGV…RRRK). Composition is skewed to polar residues over residues 63–72 (SPQPWSNEWS), 104–114 (VPSRPTASHGL), and 155–165 (QSFSPSLMRSS). The segment covering 237–251 (SPSVSMPSPSIAMSA) has biased composition (low complexity). A compositionally biased stretch (polar residues) spans 252–261 (RQQQHYIAQP). Low complexity predominate over residues 262–295 (SSSSLTNSSPSSADDIFSSSHSSDPHSLSSWQSD). Polar residues predominate over residues 367 to 401 (DHSFSSSNMLPATPQKFDTSFNTSQVHNVSRSPSL). The span at 420-429 (PTHRRTHSRK) shows a compositional bias: basic residues. Over residues 436–453 (NAPKPAKASGSSSRGSNK) the composition is skewed to low complexity.

It belongs to the wetA family.

BrlA, abaA and wetA are pivotal regulators of conidiophore development and conidium maturation. They act individually and together to regulate their own expression and that of numerous other sporulation-specific genes. Responsible for activating a set of genes whose products make up the final two conidial wall layers or direct their assembly and though this activity is responsible for acquisition of spore dormancy. The sequence is that of Developmental regulatory protein wetA from Penicillium rubens (strain ATCC 28089 / DSM 1075 / NRRL 1951 / Wisconsin 54-1255) (Penicillium chrysogenum).